A 770-amino-acid polypeptide reads, in one-letter code: Proton-coupled zinc antiporter SLC30A5 (770 aa).

Over 1–29 the chain is Cytoplasmic; that stretch reads MEEKYSSQALAGGGVLGPVDVPSARLTRY. The chain crosses the membrane as a helical span at residues 30 to 50; sequence IVLLCFAKFLKAVGLFESYDL. Over 51–53 the chain is Lumenal; sequence LKA. A helical transmembrane segment spans residues 54-74; that stretch reads VHLVQFIFIVKLGSAFFMVLF. The Cytoplasmic portion of the chain corresponds to 75–95; the sequence is QKPFSSGKVVTKHQWIKIFKH. Residues 96–116 form a helical membrane-spanning segment; the sequence is AVVGCIISLLWFFGLTLCGPL. A topological domain (lumenal) is located at residue arginine 117. A helical membrane pass occupies residues 118-138; that stretch reads TLLLFEHSDVVVLSLLSVLFT. Over 139–149 the chain is Cytoplasmic; sequence SSGGGPAKTRG. Residues 150 to 170 traverse the membrane as a helical segment; sequence AAFFIIAVICLLLFDNDDLMA. Over 171–190 the chain is Lumenal; the sequence is KIAEHPEGHHDSALTHVLYT. The chain crosses the membrane as a helical span at residues 191–211; that stretch reads VIAFLGVADHKGGVLLLVLAL. Residues 212 to 235 lie on the Cytoplasmic side of the membrane; that stretch reads CCKVGFHMASRKLSVDVGGAKRLQ. Residues 236–256 traverse the membrane as a helical segment; sequence ALSHLVSVLLLCPWVIVLSLT. Residues 257 to 264 lie on the Lumenal side of the membrane; the sequence is TESKVESW. The helical transmembrane segment at 265 to 285 threads the bilayer; sequence SSLIMPFITVIFFVVILDFYV. Residues 286–300 are Cytoplasmic-facing; that stretch reads ESICSVKMESSKCAR. The helical transmembrane segment at 301-321 threads the bilayer; sequence YGSFLIFISALLFGNFWTHPI. The Lumenal segment spans residues 322-339; it reads TDQLRAMNKPAHHESTEH. A helical transmembrane segment spans residues 340–360; sequence VLSGGVVVSAVFFILSANILS. Residues 361 to 415 lie on the Cytoplasmic side of the membrane; the sequence is SPSRKGQKGTLIGYSPEGTPLYNFMGDAIQQSSQSLPRFIKESLKQILEEYDSRQ. Residues 416–436 traverse the membrane as a helical segment; it reads IFYFLCLNLAFTFVELFYGVW. The Lumenal segment spans residues 437–445; it reads TNSLGLISD. Residues 446 to 466 form a helical membrane-spanning segment; it reads GFHMLFDCSALVMGLFAALMT. Residues histidine 448 and aspartate 452 each contribute to the Zn(2+) site. Over 467 to 480 the chain is Cytoplasmic; that stretch reads RWKATRIFSYGYGR. The chain crosses the membrane as a helical span at residues 481-501; that stretch reads VEILSGFINGLFLMVIAFFVF. At 502-517 the chain is on the lumenal side; the sequence is MESVARLVDPPDIDTN. Residues 518–538 traverse the membrane as a helical segment; that stretch reads MLTPVSVGGLIVNLVGICAFS. Positions 539–579 are his-rich loop; required for zinc transport; that stretch reads HAHSHGASRGGCHSHEHSHSYHGHSHSHGHGHSHNDHGHSH. Residues 539-597 lie on the Cytoplasmic side of the membrane; it reads HAHSHGASRGGCHSHEHSHSYHGHSHSHGHGHSHNDHGHSHGHSHVSSGGGMNTNMRGV. The tract at residues 548-586 is disordered; the sequence is GGCHSHEHSHSYHGHSHSHGHGHSHNDHGHSHGHSHVSS. The span at 558–570 shows a compositional bias: basic residues; the sequence is SYHGHSHSHGHGH. Residues 598–618 form a helical membrane-spanning segment; that stretch reads FLHVLADTLGSVGVIVSTTFI. Zn(2+) contacts are provided by histidine 600 and aspartate 604. Topologically, residues 619-622 are lumenal; it reads QQFG. Residues 623–643 traverse the membrane as a helical segment; it reads WLIADPLCSLFIATLIFLSVI. Residues 644–770 are Cytoplasmic-facing; it reads PLLKDACQVL…KYYKDGTYIM (127 aa).

The protein belongs to the cation diffusion facilitator (CDF) transporter (TC 2.A.4) family. SLC30A subfamily. In terms of assembly, heterodimer with SLC30A6/ZNT6; form a functional zinc ion transmembrane transporter.

It localises to the golgi apparatus. Its subcellular location is the golgi stack membrane. The protein resides in the cytoplasmic vesicle. The protein localises to the COPII-coated vesicle membrane. It is found in the secretory vesicle membrane. It localises to the trans-Golgi network membrane. It catalyses the reaction Zn(2+)(in) + 2 H(+)(out) = Zn(2+)(out) + 2 H(+)(in). Functionally, together with SLC30A6 forms a functional proton-coupled zinc ion antiporter mediating zinc entry into the lumen of organelles along the secretory pathway. By contributing to zinc ion homeostasis within the early secretory pathway, regulates the activation and folding of enzymes like alkaline phosphatases and enzymes involved in phosphatidylinositol glycan anchor biosynthesis. The sequence is that of Proton-coupled zinc antiporter SLC30A5 from Gallus gallus (Chicken).